Consider the following 209-residue polypeptide: GTP cyclohydrolase 1 (209 aa).

3 residues coordinate Zn(2+): Cys89, His92, and Cys163.

This sequence belongs to the GTP cyclohydrolase I family. Toroid-shaped homodecamer, composed of two pentamers of five dimers.

It carries out the reaction GTP + H2O = 7,8-dihydroneopterin 3'-triphosphate + formate + H(+). It participates in cofactor biosynthesis; 7,8-dihydroneopterin triphosphate biosynthesis; 7,8-dihydroneopterin triphosphate from GTP: step 1/1. This is GTP cyclohydrolase 1 from Sulfolobus acidocaldarius (strain ATCC 33909 / DSM 639 / JCM 8929 / NBRC 15157 / NCIMB 11770).